Consider the following 287-residue polypeptide: Ferredoxin-type protein NapH (287 aa).

Residues Met-1–Arg-29 lie on the Cytoplasmic side of the membrane. The helical transmembrane segment at Leu-30 to Leu-50 threads the bilayer. Topologically, residues His-51–His-79 are periplasmic. The chain crosses the membrane as a helical span at residues Leu-80–Gly-100. Residues Lys-101–Tyr-139 are Cytoplasmic-facing. A helical membrane pass occupies residues Val-140 to Ile-160. At Asn-161–Leu-170 the chain is on the periplasmic side. A helical membrane pass occupies residues Val-171–Val-191. Topologically, residues Val-192 to Ser-287 are cytoplasmic. 4Fe-4S ferredoxin-type domains follow at residues Thr-217–Leu-247 and Ser-251–Arg-280. Residues Cys-226, Cys-229, Cys-232, Cys-236, Cys-260, Cys-263, Cys-266, and Cys-270 each contribute to the [4Fe-4S] cluster site.

As to quaternary structure, interacts with NapC. The cofactor is [4Fe-4S] cluster.

It is found in the cell inner membrane. Required for electron transfer from ubiquinol, via NapC, to the periplasmic nitrate reductase NapAB complex. This is Ferredoxin-type protein NapH (napH) from Escherichia coli (strain K12).